Here is a 386-residue protein sequence, read N- to C-terminus: WD repeat-containing protein 89 (386 aa).

6 WD repeats span residues 21-65, 68-107, 112-156, 167-207, 213-253, and 318-357; these read KEPT…LLRE, GSPGLLNGVRFANSCDNVYSASTDGTVKCWDARLASEKPA, GYPS…QDLS, THSD…EEDA, NSVS…TDEP, and GHAATVRSFCWTVSEDSLLTGGEDAQLLLWKPGAVEKTFT.

The sequence is that of WD repeat-containing protein 89 (Wdr89) from Rattus norvegicus (Rat).